The chain runs to 240 residues: uncharacterized protein (240 aa).

The tract at residues 1 to 27 (MKDLQKKSSVRRQITNEDDERYGEDSI) is disordered. 2 positions are modified to phosphoserine: serine 59 and serine 95. Residues 189–227 (RTPSPTGKSVGDEATSNNMHSSSAIRNPNGPTVDPEEGK) form a disordered region. Positions 202 to 218 (ATSNNMHSSSAIRNPNG) are enriched in polar residues.

This is an uncharacterized protein from Saccharomyces cerevisiae (strain ATCC 204508 / S288c) (Baker's yeast).